The primary structure comprises 249 residues: MLQLWKLVLLCGVLTGTSESLLDNLGNDLSNVVDKLEPVLHEGLETVDNTLKGILEKLKVDLGVLQKSSAWQLAKQKAQEAEKLLNNVISKLLPTNTDIFGLKISNSLILDVKAEPIDDGKGLNLSFPVTANVTVAGPIIGQIINLKASLDLLTAVTIETDPQTHQPVAVLGECASDPTSISLSLLDKHSQIINKFVNSVINTLKSTVSSLLQKEICPLIRIFIHSLDVNVIQQVVDNPQHKTQLQTLI.

A signal peptide spans 1-18 (MLQLWKLVLLCGVLTGTS). Residues Asn124 and Asn132 are each glycosylated (N-linked (GlcNAc...) asparagine). A disulfide bond links Cys174 and Cys217.

It belongs to the BPI/LBP/Plunc superfamily. Plunc family. Detected in submandibular gland. Secreted into saliva.

It is found in the secreted. Functionally, has strong antibacterial activity against P.aeruginosa. The protein is BPI fold-containing family A member 2 (BPIFA2) of Homo sapiens (Human).